A 423-amino-acid polypeptide reads, in one-letter code: Serine--tRNA ligase (423 aa).

An L-serine-binding site is contributed by 231-233 (TAE). An ATP-binding site is contributed by 262–264 (RSE). Glu285 is an L-serine binding site. An ATP-binding site is contributed by 349-352 (EIGS). L-serine is bound at residue Ser385.

Belongs to the class-II aminoacyl-tRNA synthetase family. Type-1 seryl-tRNA synthetase subfamily. In terms of assembly, homodimer. The tRNA molecule binds across the dimer.

It is found in the cytoplasm. The catalysed reaction is tRNA(Ser) + L-serine + ATP = L-seryl-tRNA(Ser) + AMP + diphosphate + H(+). It catalyses the reaction tRNA(Sec) + L-serine + ATP = L-seryl-tRNA(Sec) + AMP + diphosphate + H(+). Its pathway is aminoacyl-tRNA biosynthesis; selenocysteinyl-tRNA(Sec) biosynthesis; L-seryl-tRNA(Sec) from L-serine and tRNA(Sec): step 1/1. In terms of biological role, catalyzes the attachment of serine to tRNA(Ser). Is also able to aminoacylate tRNA(Sec) with serine, to form the misacylated tRNA L-seryl-tRNA(Sec), which will be further converted into selenocysteinyl-tRNA(Sec). This is Serine--tRNA ligase from Acholeplasma laidlawii (strain PG-8A).